Consider the following 239-residue polypeptide: Alpha-acetolactate decarboxylase (239 aa).

Belongs to the alpha-acetolactate decarboxylase family.

The enzyme catalyses (2S)-2-acetolactate + H(+) = (R)-acetoin + CO2. It functions in the pathway polyol metabolism; (R,R)-butane-2,3-diol biosynthesis; (R,R)-butane-2,3-diol from pyruvate: step 2/3. With respect to regulation, the enzyme is active only in the presence of branched-chain amino acids. Valine results in much higher activation than leucine or isoleucine. Its function is as follows. Converts acetolactate into acetoin. Regulates leucine and valine biosynthesis by diverting the flux of alpha-acetolactate towards acetoin when the branched-chain amino acids are present in high concentration. This chain is Alpha-acetolactate decarboxylase (aldC), found in Streptococcus thermophilus.